Reading from the N-terminus, the 507-residue chain is Maturase K (507 aa).

It belongs to the intron maturase 2 family. MatK subfamily.

It localises to the plastid. The protein localises to the chloroplast. In terms of biological role, usually encoded in the trnK tRNA gene intron. Probably assists in splicing its own and other chloroplast group II introns. This Araucaria heterophylla (Norfolk Island pine) protein is Maturase K.